Consider the following 306-residue polypeptide: MQQQQAWAAGLGGLAVAGVGEEGGGGGPAPTTVDEASMERSKSFVKALQELKNLRPQLYSASEYCEKSYLHSEQKQMVLDNLKDYAVRALVNAVDHLGTVAYKLTDLYEQQASEVSTLELKVACLNQQVLTCQTYTDKEGIRQQQMTGTATRHHKHYIVPTLANKRMQAFSEMQTDADIDSRPRPYPSAKTLFWHLASEKNSKTNGARQSEFVLEETKATKPASRGKEPSTSPLPKHLQTNLASSDFAMHNVGMKDQPGVRHLSSFSSFDNPRGRQIQKAPLRTKSMLAAFFVKHKSGKMKNVSVR.

The disordered stretch occupies residues 200–236 (KNSKTNGARQSEFVLEETKATKPASRGKEPSTSPLPK).

This sequence belongs to the ABI family. As to quaternary structure, binds SCAR.

It is found in the cytoplasm. Its subcellular location is the cytoskeleton. Involved in regulation of actin and microtubule organization. Part of a WAVE complex that activates the Arp2/3 complex. The chain is Probable protein ABIL1 from Oryza sativa subsp. japonica (Rice).